The chain runs to 261 residues: Cytochrome c oxidase subunit 3 (261 aa).

The Mitochondrial matrix portion of the chain corresponds to 1 to 15 (MTHQTHAYHMVNPSP). A helical transmembrane segment spans residues 16-34 (WPLTGALSALLMTSGLIMW). Topologically, residues 35–40 (FHYNSM) are mitochondrial intermembrane. The helical transmembrane segment at 41–66 (ALLTLGFTTNLLTMYQWWRDVIREGT) threads the bilayer. At 67 to 72 (FQGHHT) the chain is on the mitochondrial matrix side. Residues 73 to 105 (PIVQKGLRYGMVLFIVSEVFFFAGFFWAFYHSS) traverse the membrane as a helical segment. Residues 106–128 (LAPTPELGGCWPPTGIIPLNPLE) lie on the Mitochondrial intermembrane side of the membrane. Residues 129 to 152 (VPLLNTSVLLASGVSITWAHHSLM) form a helical membrane-spanning segment. Residues 153–155 (EGN) lie on the Mitochondrial matrix side of the membrane. The helical transmembrane segment at 156 to 183 (RKHMLQALFITISLGVYFTLLQASEYYE) threads the bilayer. Residues 184-190 (TSFTISD) are Mitochondrial intermembrane-facing. A helical transmembrane segment spans residues 191–223 (GVYGSTFFMATGFHGLHVIIGSTFLIVCFLRQL). Topologically, residues 224–232 (YYHFTSNHH) are mitochondrial matrix. Residues 233–256 (FGFEAAAWYWHFVDVVWLFLYVSI) traverse the membrane as a helical segment. The Mitochondrial intermembrane segment spans residues 257 to 261 (YWWGS).

Belongs to the cytochrome c oxidase subunit 3 family. In terms of assembly, component of the cytochrome c oxidase (complex IV, CIV), a multisubunit enzyme composed of 14 subunits. The complex is composed of a catalytic core of 3 subunits MT-CO1, MT-CO2 and MT-CO3, encoded in the mitochondrial DNA, and 11 supernumerary subunits COX4I, COX5A, COX5B, COX6A, COX6B, COX6C, COX7A, COX7B, COX7C, COX8 and NDUFA4, which are encoded in the nuclear genome. The complex exists as a monomer or a dimer and forms supercomplexes (SCs) in the inner mitochondrial membrane with NADH-ubiquinone oxidoreductase (complex I, CI) and ubiquinol-cytochrome c oxidoreductase (cytochrome b-c1 complex, complex III, CIII), resulting in different assemblies (supercomplex SCI(1)III(2)IV(1) and megacomplex MCI(2)III(2)IV(2)).

It is found in the mitochondrion inner membrane. It carries out the reaction 4 Fe(II)-[cytochrome c] + O2 + 8 H(+)(in) = 4 Fe(III)-[cytochrome c] + 2 H2O + 4 H(+)(out). In terms of biological role, component of the cytochrome c oxidase, the last enzyme in the mitochondrial electron transport chain which drives oxidative phosphorylation. The respiratory chain contains 3 multisubunit complexes succinate dehydrogenase (complex II, CII), ubiquinol-cytochrome c oxidoreductase (cytochrome b-c1 complex, complex III, CIII) and cytochrome c oxidase (complex IV, CIV), that cooperate to transfer electrons derived from NADH and succinate to molecular oxygen, creating an electrochemical gradient over the inner membrane that drives transmembrane transport and the ATP synthase. Cytochrome c oxidase is the component of the respiratory chain that catalyzes the reduction of oxygen to water. Electrons originating from reduced cytochrome c in the intermembrane space (IMS) are transferred via the dinuclear copper A center (CU(A)) of subunit 2 and heme A of subunit 1 to the active site in subunit 1, a binuclear center (BNC) formed by heme A3 and copper B (CU(B)). The BNC reduces molecular oxygen to 2 water molecules using 4 electrons from cytochrome c in the IMS and 4 protons from the mitochondrial matrix. This chain is Cytochrome c oxidase subunit 3 (MT-CO3), found in Canis lupus familiaris (Dog).